The following is a 747-amino-acid chain: Phosphoribosylformylglycinamidine synthase subunit PurL (747 aa).

His46 is a catalytic residue. ATP-binding residues include Tyr49 and Lys88. Residue Glu90 participates in Mg(2+) binding. Substrate-binding positions include 91 to 94 (SHNH) and Arg113. His92 functions as the Proton acceptor in the catalytic mechanism. A Mg(2+)-binding site is contributed by Asp114. Gln237 lines the substrate pocket. Asp265 contacts Mg(2+). Residue 309–311 (ESQ) participates in substrate binding. ATP-binding residues include Asp493 and Gly530. Position 531 (Asn531) interacts with Mg(2+). Ser533 provides a ligand contact to substrate.

It belongs to the FGAMS family. Monomer. Part of the FGAM synthase complex composed of 1 PurL, 1 PurQ and 2 PurS subunits.

The protein localises to the cytoplasm. It catalyses the reaction N(2)-formyl-N(1)-(5-phospho-beta-D-ribosyl)glycinamide + L-glutamine + ATP + H2O = 2-formamido-N(1)-(5-O-phospho-beta-D-ribosyl)acetamidine + L-glutamate + ADP + phosphate + H(+). It functions in the pathway purine metabolism; IMP biosynthesis via de novo pathway; 5-amino-1-(5-phospho-D-ribosyl)imidazole from N(2)-formyl-N(1)-(5-phospho-D-ribosyl)glycinamide: step 1/2. Part of the phosphoribosylformylglycinamidine synthase complex involved in the purines biosynthetic pathway. Catalyzes the ATP-dependent conversion of formylglycinamide ribonucleotide (FGAR) and glutamine to yield formylglycinamidine ribonucleotide (FGAM) and glutamate. The FGAM synthase complex is composed of three subunits. PurQ produces an ammonia molecule by converting glutamine to glutamate. PurL transfers the ammonia molecule to FGAR to form FGAM in an ATP-dependent manner. PurS interacts with PurQ and PurL and is thought to assist in the transfer of the ammonia molecule from PurQ to PurL. The polypeptide is Phosphoribosylformylglycinamidine synthase subunit PurL (Deinococcus radiodurans (strain ATCC 13939 / DSM 20539 / JCM 16871 / CCUG 27074 / LMG 4051 / NBRC 15346 / NCIMB 9279 / VKM B-1422 / R1)).